The chain runs to 173 residues: Regulator of ribonuclease activity A (173 aa).

The protein belongs to the RraA family. As to quaternary structure, homotrimer. Binds to both RNA-binding sites in the C-terminal region of Rne and to RhlB.

It is found in the cytoplasm. In terms of biological role, globally modulates RNA abundance by binding to RNase E (Rne) and regulating its endonucleolytic activity. Can modulate Rne action in a substrate-dependent manner by altering the composition of the degradosome. Modulates RNA-binding and helicase activities of the degradosome. The sequence is that of Regulator of ribonuclease activity A from Vibrio vulnificus (strain CMCP6).